Consider the following 318-residue polypeptide: Ribonuclease Z (318 aa).

Residues His62, His64, Asp66, His67, His144, Asp215, and His273 each coordinate Zn(2+). Asp66 (proton acceptor) is an active-site residue.

It belongs to the RNase Z family. As to quaternary structure, homodimer. It depends on Zn(2+) as a cofactor.

It catalyses the reaction Endonucleolytic cleavage of RNA, removing extra 3' nucleotides from tRNA precursor, generating 3' termini of tRNAs. A 3'-hydroxy group is left at the tRNA terminus and a 5'-phosphoryl group is left at the trailer molecule.. Functionally, zinc phosphodiesterase, which displays some tRNA 3'-processing endonuclease activity. Probably involved in tRNA maturation, by removing a 3'-trailer from precursor tRNA. This Prochlorococcus marinus (strain MIT 9313) protein is Ribonuclease Z.